Reading from the N-terminus, the 334-residue chain is Dihydroorotate dehydrogenase (quinone) (334 aa).

Residues 59-63 and T83 contribute to the FMN site; that span reads AGLDK. K63 provides a ligand contact to substrate. 108-112 contacts substrate; the sequence is NRMGF. Positions 136 and 169 each coordinate FMN. Position 169 (N169) interacts with substrate. S172 (nucleophile) is an active-site residue. A substrate-binding site is contributed by N174. 2 residues coordinate FMN: K214 and T242. Residue 243–244 coordinates substrate; it reads NT. FMN contacts are provided by residues G265, G294, and 315–316; that span reads YS.

The protein belongs to the dihydroorotate dehydrogenase family. Type 2 subfamily. Monomer. Requires FMN as cofactor.

Its subcellular location is the cell membrane. The enzyme catalyses (S)-dihydroorotate + a quinone = orotate + a quinol. Its pathway is pyrimidine metabolism; UMP biosynthesis via de novo pathway; orotate from (S)-dihydroorotate (quinone route): step 1/1. Its function is as follows. Catalyzes the conversion of dihydroorotate to orotate with quinone as electron acceptor. The polypeptide is Dihydroorotate dehydrogenase (quinone) (Acinetobacter baumannii (strain AB0057)).